The following is a 430-amino-acid chain: Enolase (430 aa).

Gln164 is a (2R)-2-phosphoglycerate binding site. Glu208 serves as the catalytic Proton donor. Mg(2+) contacts are provided by Asp245, Glu288, and Asp315. Lys340, Arg369, Ser370, and Lys391 together coordinate (2R)-2-phosphoglycerate. Lys340 functions as the Proton acceptor in the catalytic mechanism.

The protein belongs to the enolase family. Requires Mg(2+) as cofactor.

It localises to the cytoplasm. The protein localises to the secreted. Its subcellular location is the cell surface. The catalysed reaction is (2R)-2-phosphoglycerate = phosphoenolpyruvate + H2O. Its pathway is carbohydrate degradation; glycolysis; pyruvate from D-glyceraldehyde 3-phosphate: step 4/5. Its function is as follows. Catalyzes the reversible conversion of 2-phosphoglycerate (2-PG) into phosphoenolpyruvate (PEP). It is essential for the degradation of carbohydrates via glycolysis. The sequence is that of Enolase from Thermococcus onnurineus (strain NA1).